The chain runs to 585 residues: Testis-specific serine kinase substrate (585 aa).

Residues 91–108 (EPDSSGTDSTTEDSGPLA) show a composition bias toward low complexity. Residues 91-125 (EPDSSGTDSTTEDSGPLALPGPPASPTTPWAPEDP) are disordered. Serine 224 carries the post-translational modification Phosphoserine. Disordered regions lie at residues 264–312 (HGLS…SEQE) and 559–585 (LEGSTGAMGGGSNGGAPPKRGSPGSEQ). A Phosphoserine; by TSSK1 and TSSK2 modification is found at serine 281. Serine 309 carries the post-translational modification Phosphoserine.

In terms of processing, phosphorylated on serine residue(s) by STK22A/TSSK1 and STK22B/TSSK2. In terms of tissue distribution, testis specific.

The protein resides in the cytoplasm. Its subcellular location is the cytoskeleton. The protein localises to the microtubule organizing center. It localises to the centrosome. It is found in the centriole. The protein resides in the cytoplasmic vesicle. Its subcellular location is the secretory vesicle. The protein localises to the acrosome. In terms of biological role, may play a role in testicular physiology, most probably in the process of spermatogenesis or spermatid development. The protein is Testis-specific serine kinase substrate (Tsks) of Mus musculus (Mouse).